We begin with the raw amino-acid sequence, 515 residues long: Maturase K (515 aa).

The protein belongs to the intron maturase 2 family. MatK subfamily.

It localises to the plastid. The protein localises to the chloroplast. Usually encoded in the trnK tRNA gene intron. Probably assists in splicing its own and other chloroplast group II introns. The sequence is that of Maturase K from Pinus roxburghii (Chir pine).